The primary structure comprises 297 residues: Glutamyl-Q tRNA(Asp) synthetase (297 aa).

L-glutamate-binding positions include 9–13 and glutamate 45; that span reads RFAPS. A 'HIGH' region motif is present at residues 12-22; it reads PSPTGPLHFGS. Zn(2+) is bound by residues cysteine 101, cysteine 103, and cysteine 118. L-glutamate is bound by residues tyrosine 170 and arginine 188. Positions 226–230 match the 'KMSKS' region motif; it reads KLSKS. Lysine 229 is a binding site for ATP.

Belongs to the class-I aminoacyl-tRNA synthetase family. GluQ subfamily. Requires Zn(2+) as cofactor.

Functionally, catalyzes the tRNA-independent activation of glutamate in presence of ATP and the subsequent transfer of glutamate onto a tRNA(Asp). Glutamate is transferred on the 2-amino-5-(4,5-dihydroxy-2-cyclopenten-1-yl) moiety of the queuosine in the wobble position of the QUC anticodon. This chain is Glutamyl-Q tRNA(Asp) synthetase, found in Xanthomonas campestris pv. campestris (strain 8004).